The chain runs to 164 residues: ATP synthase subunit b (164 aa).

Residues 10–32 (AVAFVLFFVLFGKKLWTPLAAAL) traverse the membrane as a helical segment.

Belongs to the ATPase B chain family. In terms of assembly, F-type ATPases have 2 components, F(1) - the catalytic core - and F(0) - the membrane proton channel. F(1) has five subunits: alpha(3), beta(3), gamma(1), delta(1), epsilon(1). F(0) has three main subunits: a(1), b(2) and c(10-14). The alpha and beta chains form an alternating ring which encloses part of the gamma chain. F(1) is attached to F(0) by a central stalk formed by the gamma and epsilon chains, while a peripheral stalk is formed by the delta and b chains.

The protein resides in the cell inner membrane. Functionally, f(1)F(0) ATP synthase produces ATP from ADP in the presence of a proton or sodium gradient. F-type ATPases consist of two structural domains, F(1) containing the extramembraneous catalytic core and F(0) containing the membrane proton channel, linked together by a central stalk and a peripheral stalk. During catalysis, ATP synthesis in the catalytic domain of F(1) is coupled via a rotary mechanism of the central stalk subunits to proton translocation. Its function is as follows. Component of the F(0) channel, it forms part of the peripheral stalk, linking F(1) to F(0). This Gluconacetobacter diazotrophicus (strain ATCC 49037 / DSM 5601 / CCUG 37298 / CIP 103539 / LMG 7603 / PAl5) protein is ATP synthase subunit b.